We begin with the raw amino-acid sequence, 146 residues long: Hemoglobin subunit beta-2 (146 aa).

The 145-residue stretch at 2 to 146 (EWTDFERATI…VVSALGRQYH (145 aa)) folds into the Globin domain. 2 residues coordinate heme b: H63 and H92.

This sequence belongs to the globin family. In terms of assembly, hb3 is a heterotetramer of two alpha-2 chains and two beta-2 chains. Red blood cells.

Functionally, involved in oxygen transport from gills to the various peripheral tissues. This Anarhichas minor (Arctic spotted wolffish) protein is Hemoglobin subunit beta-2 (hbb2).